The chain runs to 403 residues: uncharacterized protein (403 aa).

A run of 2 helical transmembrane segments spans residues 29–49 (FVIF…CGFL) and 55–75 (AFIA…FFGC).

This sequence belongs to the chlamydial CPn_0129/CT_036/TC_0306 family.

It is found in the cell membrane. This is an uncharacterized protein from Chlamydia trachomatis serovar D (strain ATCC VR-885 / DSM 19411 / UW-3/Cx).